Consider the following 431-residue polypeptide: Aspartokinase (431 aa).

It belongs to the aspartokinase family.

It catalyses the reaction L-aspartate + ATP = 4-phospho-L-aspartate + ADP. The protein operates within amino-acid biosynthesis; L-lysine biosynthesis via DAP pathway; (S)-tetrahydrodipicolinate from L-aspartate: step 1/4. It functions in the pathway amino-acid biosynthesis; L-methionine biosynthesis via de novo pathway; L-homoserine from L-aspartate: step 1/3. Its pathway is amino-acid biosynthesis; L-threonine biosynthesis; L-threonine from L-aspartate: step 1/5. The sequence is that of Aspartokinase (lysC) from Chlamydia trachomatis serovar D (strain ATCC VR-885 / DSM 19411 / UW-3/Cx).